A 471-amino-acid polypeptide reads, in one-letter code: BRISC complex subunit FAM175B (471 aa).

The MPN domain occupies 7-161 (LVTISGAALS…THKFRHVFLR (155 aa)). A coiled-coil region spans residues 245 to 272 (ESDLEVAELEKQVHELKIKIATQQLAKR). The disordered stretch occupies residues 343 to 445 (AEKSRRAGRS…FSDAECPISS (103 aa)). The span at 359–370 (NQQQETQNFFTN) shows a compositional bias: low complexity.

The protein belongs to the FAM175 family. Abro1 subfamily. Component of the BRISC complex, at least composed of FAM175B/ABRO1, BRCC3/BRCC36, BABAM2 and BABAM1/NBA1. Within the complex, interacts directly with BRCC3/BRCC36. The heterodimer with BRCC3/BRCC36 assembles into a heterotetramer. The BRISC complex binds polyubiquitin.

Its subcellular location is the cytoplasm. It localises to the nucleus. The protein resides in the cytoskeleton. It is found in the spindle pole. Component of the BRISC complex that specifically cleaves 'Lys-63'-linked polyubiquitin, leaving the last ubiquitin chain attached to its substrates. Does not have activity by itself, but the catalytic subunit BRCC3/BRCC36 needs to be associated into a heterotetramer with FAM175B for minimal in vitro activity. May act as a central scaffold protein that assembles the various components of the BRISC complex and retains them in the cytoplasm. Plays a role in regulating the onset of apoptosis via its role in modulating 'Lys-63'-linked ubiquitination of target proteins. Required for normal mitotic spindle assembly and microtubule attachment to kinetochores via its role in deubiquitinating numa1. The polypeptide is BRISC complex subunit FAM175B (Camponotus floridanus (Florida carpenter ant)).